Here is a 317-residue protein sequence, read N- to C-terminus: Transaldolase A (317 aa).

Residue K132 is the Schiff-base intermediate with substrate of the active site.

The protein belongs to the transaldolase family. Type 1 subfamily. Homodimer.

It localises to the cytoplasm. It carries out the reaction D-sedoheptulose 7-phosphate + D-glyceraldehyde 3-phosphate = D-erythrose 4-phosphate + beta-D-fructose 6-phosphate. The protein operates within carbohydrate degradation; pentose phosphate pathway; D-glyceraldehyde 3-phosphate and beta-D-fructose 6-phosphate from D-ribose 5-phosphate and D-xylulose 5-phosphate (non-oxidative stage): step 2/3. Functionally, transaldolase is important for the balance of metabolites in the pentose-phosphate pathway. The polypeptide is Transaldolase A (talA) (Pasteurella multocida (strain Pm70)).